A 317-amino-acid polypeptide reads, in one-letter code: USG-1 protein homolog (317 aa).

This sequence belongs to the aspartate-semialdehyde dehydrogenase family.

The protein is USG-1 protein homolog (usg) of Haemophilus influenzae (strain ATCC 51907 / DSM 11121 / KW20 / Rd).